Here is a 243-residue protein sequence, read N- to C-terminus: tRNA (guanine-N(1)-)-methyltransferase (243 aa).

S-adenosyl-L-methionine-binding positions include Gly-110 and 130-135 (VGDYVM).

Belongs to the RNA methyltransferase TrmD family. Homodimer.

It is found in the cytoplasm. The enzyme catalyses guanosine(37) in tRNA + S-adenosyl-L-methionine = N(1)-methylguanosine(37) in tRNA + S-adenosyl-L-homocysteine + H(+). Its function is as follows. Specifically methylates guanosine-37 in various tRNAs. The protein is tRNA (guanine-N(1)-)-methyltransferase of Treponema denticola (strain ATCC 35405 / DSM 14222 / CIP 103919 / JCM 8153 / KCTC 15104).